The chain runs to 162 residues: Interleukin-15 (162 aa).

An N-terminal signal peptide occupies residues 1-29 (MRILKPYLRSTSIQCYLCLLLNSHFLTEA). The propeptide occupies 30–48 (CIPVFILSCINAGLPKTEA). Disulfide bonds link Cys-83-Cys-133 and Cys-90-Cys-136. Residues Asn-104 and Asn-127 are each glycosylated (N-linked (GlcNAc...) asparagine).

It belongs to the IL-15/IL-21 family.

It localises to the secreted. Cytokine that plays a major role in the development of inflammatory and protective immune responses to microbial invaders and parasites by modulating immune cells of both the innate and adaptive immune systems. Stimulates the proliferation of natural killer cells, T-cells and B-cells and promotes the secretion of several cytokines. In monocytes, induces the production of IL8 and monocyte chemotactic protein 1/CCL2, two chemokines that attract neutrophils and monocytes respectively to sites of infection. Unlike most cytokines, which are secreted in soluble form, IL15 is expressed in association with its high affinity IL15RA on the surface of IL15-producing cells and delivers signals to target cells that express IL2RB and IL2RG receptor subunits. Binding to its receptor triggers the phosphorylation of JAK1 and JAK3 and the recruitment and subsequent phosphorylation of signal transducer and activator of transcription-3/STAT3 and STAT5. In mast cells, induces the rapid tyrosine phosphorylation of STAT6 and thereby controls mast cell survival and release of cytokines such as IL4. This chain is Interleukin-15 (IL15), found in Felis catus (Cat).